The chain runs to 82 residues: Cell division topological specificity factor (82 aa).

This sequence belongs to the MinE family.

Functionally, prevents the cell division inhibition by proteins MinC and MinD at internal division sites while permitting inhibition at polar sites. This ensures cell division at the proper site by restricting the formation of a division septum at the midpoint of the long axis of the cell. This Buchnera aphidicola subsp. Cinara cedri (strain Cc) protein is Cell division topological specificity factor.